The primary structure comprises 452 residues: UDP-N-acetylmuramoylalanine--D-glutamate ligase (452 aa).

119–125 (GSNGKTT) is an ATP binding site.

The protein belongs to the MurCDEF family.

The protein resides in the cytoplasm. The enzyme catalyses UDP-N-acetyl-alpha-D-muramoyl-L-alanine + D-glutamate + ATP = UDP-N-acetyl-alpha-D-muramoyl-L-alanyl-D-glutamate + ADP + phosphate + H(+). Its pathway is cell wall biogenesis; peptidoglycan biosynthesis. In terms of biological role, cell wall formation. Catalyzes the addition of glutamate to the nucleotide precursor UDP-N-acetylmuramoyl-L-alanine (UMA). In Streptococcus pyogenes serotype M28 (strain MGAS6180), this protein is UDP-N-acetylmuramoylalanine--D-glutamate ligase.